Here is a 59-residue protein sequence, read N- to C-terminus: Protein translocase subunit SecE (59 aa).

The chain crosses the membrane as a helical span at residues 30 to 50; that stretch reads ITVITTVIFFAIFFALIDSGI.

Belongs to the SecE/SEC61-gamma family. As to quaternary structure, component of the Sec protein translocase complex. Heterotrimer consisting of SecY, SecE and SecG subunits. The heterotrimers can form oligomers, although 1 heterotrimer is thought to be able to translocate proteins. Interacts with the ribosome. Interacts with SecDF, and other proteins may be involved. Interacts with SecA.

It localises to the cell membrane. Essential subunit of the Sec protein translocation channel SecYEG. Clamps together the 2 halves of SecY. May contact the channel plug during translocation. The protein is Protein translocase subunit SecE of Bacillus licheniformis.